A 508-amino-acid chain; its full sequence is Splicing regulatory glutamine/lysine-rich protein 1 (508 aa).

The RRM domain occupies 66–142 (RTVYVGNLNS…RPLKINHSNN (77 aa)). Phosphoserine is present on residues serine 171 and serine 184. Residues 173–508 (ISAAIEPESG…ENLSTKTEAV (336 aa)) form a disordered region. Basic and acidic residues predominate over residues 180 to 189 (ESGKSNERKG). Residues 190-259 (GRSRSHTRSK…KSRSRSHSRD (70 aa)) are compositionally biased toward basic residues. The span at 260–355 (KRKDTREKIK…DRSKEIDEKR (96 aa)) shows a compositional bias: basic and acidic residues. Position 363 is a phosphothreonine (threonine 363). Residues 372–388 (RRSRSSSRERRRRRSRS) are compositionally biased toward basic residues. Residues 419–488 (REKERDHISE…DAPRTEENKI (70 aa)) show a composition bias toward basic and acidic residues. Residues 489 to 508 (QHNGNCQLNEENLSTKTEAV) show a composition bias toward polar residues. Lysine 504 is covalently cross-linked (Glycyl lysine isopeptide (Lys-Gly) (interchain with G-Cter in SUMO2)).

Belongs to the splicing factor SR family. Homodimer. Binds SFRS1, SFRS2, SFRS3 and SFRS6. Interacts with the spliceosome. Interacts with SREK1IP1.

The protein localises to the nucleus. In terms of biological role, participates in the regulation of alternative splicing by modulating the activity of other splice facors. Inhibits the splicing activity of SFRS1, SFRS2 and SFRS6. Augments the splicing activity of SFRS3. The sequence is that of Splicing regulatory glutamine/lysine-rich protein 1 (SREK1) from Homo sapiens (Human).